Here is a 575-residue protein sequence, read N- to C-terminus: Sulfite reductase [NADPH] hemoprotein beta-component (575 aa).

The [4Fe-4S] cluster site is built by Cys440, Cys446, Cys485, and Cys489. Cys489 is a binding site for siroheme.

It belongs to the nitrite and sulfite reductase 4Fe-4S domain family. Alpha(8)-beta(8). The alpha component is a flavoprotein, the beta component is a hemoprotein. Requires siroheme as cofactor. It depends on [4Fe-4S] cluster as a cofactor.

The enzyme catalyses hydrogen sulfide + 3 NADP(+) + 3 H2O = sulfite + 3 NADPH + 4 H(+). Its pathway is sulfur metabolism; hydrogen sulfide biosynthesis; hydrogen sulfide from sulfite (NADPH route): step 1/1. Its function is as follows. Component of the sulfite reductase complex that catalyzes the 6-electron reduction of sulfite to sulfide. This is one of several activities required for the biosynthesis of L-cysteine from sulfate. This is Sulfite reductase [NADPH] hemoprotein beta-component from Chromohalobacter salexigens (strain ATCC BAA-138 / DSM 3043 / CIP 106854 / NCIMB 13768 / 1H11).